The sequence spans 263 residues: Kallikrein 1-related peptidase b24 (263 aa).

Positions 1–17 are cleaved as a signal peptide; the sequence is MWFLILFLALSLGGIDA. A propeptide spans 18 to 24 (activation peptide); it reads APPVQSR. The region spanning 25–260 is the Peptidase S1 domain; sequence VVGGFKCEKN…FASWIKDTMA (236 aa). Intrachain disulfides connect cysteine 31–cysteine 175, cysteine 50–cysteine 66, cysteine 154–cysteine 221, cysteine 186–cysteine 200, and cysteine 211–cysteine 236. Residue histidine 65 is the Charge relay system of the active site. 2 N-linked (GlcNAc...) asparagine glycosylation sites follow: asparagine 69 and asparagine 105. Aspartate 122 functions as the Charge relay system in the catalytic mechanism. N-linked (GlcNAc...) asparagine glycosylation is present at asparagine 185. Residue serine 215 is the Charge relay system of the active site.

This sequence belongs to the peptidase S1 family. Kallikrein subfamily.

The enzyme catalyses Preferential cleavage of Arg-|-Xaa bonds in small molecule substrates. Highly selective action to release kallidin (lysyl-bradykinin) from kininogen involves hydrolysis of Met-|-Xaa or Leu-|-Xaa.. Glandular kallikreins cleave Met-Lys and Arg-Ser bonds in kininogen to release Lys-bradykinin. The polypeptide is Kallikrein 1-related peptidase b24 (Klk1b24) (Mus musculus (Mouse)).